Here is a 459-residue protein sequence, read N- to C-terminus: uncharacterized protein (459 aa).

The next 12 helical transmembrane spans lie at 25 to 45 (SYGF…IYLL), 52 to 72 (AGIP…FAAI), 95 to 115 (PYLL…FLSP), 123 to 143 (LIYA…VNIP), 167 to 187 (IGSL…LVKF), 192 to 212 (VGYP…FYIC), 249 to 269 (VLMT…LVYF), 279 to 299 (LMAY…VFLP), 310 to 330 (TAMI…MLPS), 332 to 352 (VYVF…PNGI), 389 to 409 (SLSG…PNAV), and 420 to 440 (ALLL…IGFL).

This sequence belongs to the sodium:galactoside symporter (TC 2.A.2) family.

It is found in the cell membrane. This is an uncharacterized protein from Bacillus subtilis (strain 168).